Consider the following 255-residue polypeptide: Small ribosomal subunit protein uS3c (255 aa).

Positions 51 to 124 (IRESSNTSYG…NKNQNKNTGQ (74 aa)) constitute a KH type-2 domain. The tract at residues 96 to 121 (EKNRDKNKSNKNSALDQSVNKNQNKN) is disordered. The span at 108–121 (SALDQSVNKNQNKN) shows a compositional bias: polar residues.

Belongs to the universal ribosomal protein uS3 family. In terms of assembly, part of the 30S ribosomal subunit.

It localises to the plastid. Its subcellular location is the chloroplast. This is Small ribosomal subunit protein uS3c (rps3) from Chaetosphaeridium globosum (Charophycean green alga).